The sequence spans 326 residues: Virulence factor CaO19.6688 (326 aa).

Disordered regions lie at residues 19–91 (FNSL…KLPS), 112–137 (EEDN…GTTK), 161–184 (NTTI…PSFP), 222–245 (NVGQ…NDLL), and 276–326 (YEYG…PKIK). Composition is skewed to low complexity over residues 21-42 (SLKS…SSSS), 53-78 (NRNT…NTTP), and 117-137 (EQQL…GTTK).

Functionally, virulence factor involved in pathogen-host interaction. Modulates host pro-inflammatory cytokine interleukin-1 beta (IL1B) expression. The polypeptide is Virulence factor CaO19.6688 (Candida albicans (strain SC5314 / ATCC MYA-2876) (Yeast)).